A 209-amino-acid chain; its full sequence is HTLV-1 basic zipper factor (209 aa).

Positions 41-165 (EEEETVLDGL…KEKMQELGVD (125 aa)) are disordered. Composition is skewed to basic and acidic residues over residues 72-87 (PRGE…AEEK) and 94-160 (REKE…EKMQ). Short sequence motifs (nuclear localization signal) lie at residues 87–92 (KRKRKK), 116–120 (RRKRA), and 137–141 (RRERK).

The protein belongs to the HTLV-1 HBZ protein family. As to quaternary structure, interacts with host ATF4; this interaction inhibits viral RNA transcriptional activation by preventing ATF4 binding to Tax-responsive elements. Interacts with host CREB1; this interaction inhibits host CREB1 transcriptional activity. Interacts with host JUN, JUNB and JUND. Interacts with host EP300 and CREBBP; these interactions inhibit the association of the coactivators with the viral promoter. Interacts with host UBR5; this interaction regulates HBZ protein stability. Interacts with XRCC5 and XRCC6. Interacts with IRF7 and IKBKE; this interaction modulates host interferon signaling. Ubiquitinated by host E3 ligase UBR5 leading to HBZ degradation.

Its subcellular location is the host nucleus. Its function is as follows. Enhances viral infectivity and persistence, and facilitates proliferation of HTLV-1-infected lymphocytes. Mechanistically, inhibits Tax-mediated viral replication and NF-kappa-B activation. Plays a role in allowing infected T-cells to escape the cytotoxic T-lymphocyte response by maintaining low levels of viral protein production. Also inhibits host EP300 histone acetyltransferase (HAT) activity, reducing levels of acetylated histone H3 at 'Lys-18' (H3K18ac) in infected cells. Contributes to the accumulation of chromosomal abnormalities by inhibiting double-stranded DNA breaks (DSB) repair through the NHEJ pathway. Participates in the modulation of host immune response at multiple levels contributing to abnormal interferon signaling and viral pathogenesis. The polypeptide is HTLV-1 basic zipper factor (HBZ) (Human T-cell leukemia virus 1 (isolate Caribbea HS-35 subtype A) (HTLV-1)).